Here is a 158-residue protein sequence, read N- to C-terminus: Phosphopantetheine adenylyltransferase (158 aa).

Thr-10 lines the substrate pocket. ATP is bound by residues 10-11 (TF) and His-18. 3 residues coordinate substrate: Lys-42, Leu-74, and Arg-88. Residues 89-91 (GIR), Glu-99, and 124-130 (WRYLSST) each bind ATP.

The protein belongs to the bacterial CoaD family. In terms of assembly, homohexamer. Mg(2+) is required as a cofactor.

The protein resides in the cytoplasm. It catalyses the reaction (R)-4'-phosphopantetheine + ATP + H(+) = 3'-dephospho-CoA + diphosphate. The protein operates within cofactor biosynthesis; coenzyme A biosynthesis; CoA from (R)-pantothenate: step 4/5. In terms of biological role, reversibly transfers an adenylyl group from ATP to 4'-phosphopantetheine, yielding dephospho-CoA (dPCoA) and pyrophosphate. In Actinobacillus pleuropneumoniae serotype 7 (strain AP76), this protein is Phosphopantetheine adenylyltransferase.